Here is a 353-residue protein sequence, read N- to C-terminus: Protein RecA (353 aa).

An ATP-binding site is contributed by 64–71 (GPESSGKT). Residues 331–353 (LEEASAQKEEVPVEDKLFDDELE) form a disordered region. Over residues 335–346 (SAQKEEVPVEDK) the composition is skewed to basic and acidic residues.

The protein belongs to the RecA family.

The protein resides in the cytoplasm. Functionally, can catalyze the hydrolysis of ATP in the presence of single-stranded DNA, the ATP-dependent uptake of single-stranded DNA by duplex DNA, and the ATP-dependent hybridization of homologous single-stranded DNAs. It interacts with LexA causing its activation and leading to its autocatalytic cleavage. The protein is Protein RecA of Macrococcus caseolyticus (strain JCSC5402) (Macrococcoides caseolyticum).